The chain runs to 443 residues: F-box only protein 39 (443 aa).

Residues 16–61 (WATLPDVCLRRVFWWLGDRDRSRAALVCRKWNQMMYSADLWRYRTI) enclose the F-box domain.

Directly interacts with SKP1 and CUL1.

Functionally, substrate-recognition component of the SCF (SKP1-CUL1-F-box protein)-type E3 ubiquitin ligase complex. In Bos taurus (Bovine), this protein is F-box only protein 39 (FBXO39).